Here is a 192-residue protein sequence, read N- to C-terminus: Crossover junction endodeoxyribonuclease RuvC (192 aa).

Active-site residues include Asp-9, Glu-70, and Asp-143. 3 residues coordinate Mg(2+): Asp-9, Glu-70, and Asp-143. The tract at residues 161-192 is disordered; the sequence is GASVATTGPGSSSLTPAQRAWAEAEAKARRAR. Polar residues predominate over residues 163 to 176; that stretch reads SVATTGPGSSSLTP. Positions 182–192 are enriched in basic and acidic residues; it reads AEAEAKARRAR.

This sequence belongs to the RuvC family. In terms of assembly, homodimer which binds Holliday junction (HJ) DNA. The HJ becomes 2-fold symmetrical on binding to RuvC with unstacked arms; it has a different conformation from HJ DNA in complex with RuvA. In the full resolvosome a probable DNA-RuvA(4)-RuvB(12)-RuvC(2) complex forms which resolves the HJ. Mg(2+) serves as cofactor.

The protein localises to the cytoplasm. It catalyses the reaction Endonucleolytic cleavage at a junction such as a reciprocal single-stranded crossover between two homologous DNA duplexes (Holliday junction).. Its function is as follows. The RuvA-RuvB-RuvC complex processes Holliday junction (HJ) DNA during genetic recombination and DNA repair. Endonuclease that resolves HJ intermediates. Cleaves cruciform DNA by making single-stranded nicks across the HJ at symmetrical positions within the homologous arms, yielding a 5'-phosphate and a 3'-hydroxyl group; requires a central core of homology in the junction. The consensus cleavage sequence is 5'-(A/T)TT(C/G)-3'. Cleavage occurs on the 3'-side of the TT dinucleotide at the point of strand exchange. HJ branch migration catalyzed by RuvA-RuvB allows RuvC to scan DNA until it finds its consensus sequence, where it cleaves and resolves the cruciform DNA. The chain is Crossover junction endodeoxyribonuclease RuvC from Pseudarthrobacter chlorophenolicus (strain ATCC 700700 / DSM 12829 / CIP 107037 / JCM 12360 / KCTC 9906 / NCIMB 13794 / A6) (Arthrobacter chlorophenolicus).